Consider the following 526-residue polypeptide: Outer capsid protein VP5 (526 aa).

The involved in membrane permeabilization stretch occupies residues methionine 1 to glutamate 42.

Belongs to the orbivirus VP5 family.

It is found in the virion. VP5 protein is one of the two proteins (with VP2) which constitute the virus particle outer capsid. Acts as a membrane permeabilization protein that mediates release of viral particles from endosomal compartments into the cytoplasm. Permeabilization activity is probably negatively regulated by VP2 and is triggered by endosomal degradation of VP2 and exposure to low pH. This Antilocapra americana (Pronghorn) protein is Outer capsid protein VP5 (Segment-6).